We begin with the raw amino-acid sequence, 634 residues long: Probable LRR receptor-like serine/threonine-protein kinase At2g23950 (634 aa).

The signal sequence occupies residues 1 to 27; sequence MVVMKLITMKIFSVLLLLCFFVTCSLS. Topologically, residues 28–236 are extracellular; sequence SEPRNPEVEA…SSGRRTNILA (209 aa). N-linked (GlcNAc...) asparagine glycans are attached at residues Asn96 and Asn109. LRR repeat units lie at residues 99–121, 123–145, 147–167, and 171–193; these read NLRQ…ICSL, KLQT…VNQL, NLQY…ASLS, and HLSF…PART. A glycan (N-linked (GlcNAc...) asparagine) is linked at Asn155. The helical transmembrane segment at 237–257 threads the bilayer; that stretch reads VALGVSLGFAVSVILSLGFIW. Over 258–634 the chain is Cytoplasmic; sequence YRKKQRRLTM…SFAMELSGPR (377 aa). Thr296 bears the Phosphothreonine mark. Residues 299–554 enclose the Protein kinase domain; it reads FSSKSILGAG…QVALLCTQFL (256 aa). An ATP-binding site is contributed by 305–313; the sequence is LGAGGFGNV. A Phosphothreonine modification is found at Thr322. Residue Lys327 coordinates ATP. A phosphoserine mark is found at Ser380 and Ser383. Phosphothreonine is present on Thr395. Catalysis depends on Asp422, which acts as the Proton acceptor. Phosphothreonine occurs at positions 455, 456, and 461. Tyr469 is subject to Phosphotyrosine. Ser471 is modified (phosphoserine). Residue Thr472 is modified to Phosphothreonine. Ser476 carries the post-translational modification Phosphoserine. A Phosphothreonine modification is found at Thr551.

Belongs to the protein kinase superfamily. Ser/Thr protein kinase family.

The protein resides in the membrane. It carries out the reaction L-seryl-[protein] + ATP = O-phospho-L-seryl-[protein] + ADP + H(+). The catalysed reaction is L-threonyl-[protein] + ATP = O-phospho-L-threonyl-[protein] + ADP + H(+). The sequence is that of Probable LRR receptor-like serine/threonine-protein kinase At2g23950 from Arabidopsis thaliana (Mouse-ear cress).